A 111-amino-acid chain; its full sequence is MAKKQSIRSRNFRRSDPAYDLDSSTAIENETKLSVKEKVAKEIANIALRSGGSESNGISKKKKNKKQTSKKAKDKLAAALKAQAREERLDTKISKSLQKQEKLKARKQGDE.

Composition is skewed to basic residues over residues 1-12 (MAKKQSIRSRNF) and 59-73 (SKKKKNKKQTSKKAK). Disordered stretches follow at residues 1-25 (MAKKQSIRSRNFRRSDPAYDLDSST) and 47-111 (ALRS…QGDE). A compositionally biased stretch (basic and acidic residues) spans 83–111 (QAREERLDTKISKSLQKQEKLKARKQGDE).

The protein belongs to the ECM1 family. In terms of assembly, associates with the pre-60S ribosomal particle and the nucleopore complex.

The protein resides in the nucleus. Its subcellular location is the nucleolus. It localises to the cytoplasm. Pre-ribosomal factor involved in 60S ribosomal protein subunit export from the nucleus. This Schizosaccharomyces pombe (strain 972 / ATCC 24843) (Fission yeast) protein is Shuttling pre-60S factor C23B6.02c.